An 892-amino-acid polypeptide reads, in one-letter code: UPF0182 protein Gura_0902 (892 aa).

Helical transmembrane passes span 6-26 (FIII…LINF), 50-70 (VGAG…NLHF), 103-123 (LGIL…AMQW), 158-178 (MLKI…GAVY), 201-221 (LAVL…LNGC), 248-268 (ILTV…WQGA), and 271-291 (LALL…KAYP).

It belongs to the UPF0182 family.

It is found in the cell membrane. This is UPF0182 protein Gura_0902 from Geotalea uraniireducens (strain Rf4) (Geobacter uraniireducens).